The primary structure comprises 148 residues: SsrA-binding protein (148 aa).

It belongs to the SmpB family.

The protein resides in the cytoplasm. Its function is as follows. Required for rescue of stalled ribosomes mediated by trans-translation. Binds to transfer-messenger RNA (tmRNA), required for stable association of tmRNA with ribosomes. tmRNA and SmpB together mimic tRNA shape, replacing the anticodon stem-loop with SmpB. tmRNA is encoded by the ssrA gene; the 2 termini fold to resemble tRNA(Ala) and it encodes a 'tag peptide', a short internal open reading frame. During trans-translation Ala-aminoacylated tmRNA acts like a tRNA, entering the A-site of stalled ribosomes, displacing the stalled mRNA. The ribosome then switches to translate the ORF on the tmRNA; the nascent peptide is terminated with the 'tag peptide' encoded by the tmRNA and targeted for degradation. The ribosome is freed to recommence translation, which seems to be the essential function of trans-translation. This is SsrA-binding protein from Pseudothermotoga lettingae (strain ATCC BAA-301 / DSM 14385 / NBRC 107922 / TMO) (Thermotoga lettingae).